The sequence spans 288 residues: Acetyl-coenzyme A carboxylase carboxyl transferase subunit beta (288 aa).

The region spanning Leu-34–Gln-288 is the CoA carboxyltransferase N-terminal domain. Zn(2+) contacts are provided by Cys-38, Cys-41, Cys-56, and Cys-59. Residues Cys-38–Cys-59 form a C4-type zinc finger.

This sequence belongs to the AccD/PCCB family. In terms of assembly, acetyl-CoA carboxylase is a heterohexamer composed of biotin carboxyl carrier protein (AccB), biotin carboxylase (AccC) and two subunits each of ACCase subunit alpha (AccA) and ACCase subunit beta (AccD). Requires Zn(2+) as cofactor.

It is found in the cytoplasm. The enzyme catalyses N(6)-carboxybiotinyl-L-lysyl-[protein] + acetyl-CoA = N(6)-biotinyl-L-lysyl-[protein] + malonyl-CoA. It functions in the pathway lipid metabolism; malonyl-CoA biosynthesis; malonyl-CoA from acetyl-CoA: step 1/1. Functionally, component of the acetyl coenzyme A carboxylase (ACC) complex. Biotin carboxylase (BC) catalyzes the carboxylation of biotin on its carrier protein (BCCP) and then the CO(2) group is transferred by the transcarboxylase to acetyl-CoA to form malonyl-CoA. The sequence is that of Acetyl-coenzyme A carboxylase carboxyl transferase subunit beta from Streptococcus pyogenes serotype M6 (strain ATCC BAA-946 / MGAS10394).